We begin with the raw amino-acid sequence, 147 residues long: Hemoglobin subunit epsilon (147 aa).

The 145-residue stretch at 3-147 folds into the Globin domain; the sequence is HFTAEEKAAV…VAIALAHKYH (145 aa). Phosphoserine occurs at positions 14 and 51. 2 residues coordinate heme b: histidine 64 and histidine 93.

It belongs to the globin family. Heterotetramer of two alpha chains and two epsilon chains in early embryonic hemoglobin Gower-2; two zeta chains and two epsilon chains in early embryonic hemoglobin Gower-1. In terms of tissue distribution, red blood cells.

Its function is as follows. The epsilon chain is a beta-type chain of early mammalian embryonic hemoglobin. This is Hemoglobin subunit epsilon (HBE1) from Pongo pygmaeus (Bornean orangutan).